The chain runs to 338 residues: Nicotinate-nucleotide--dimethylbenzimidazole phosphoribosyltransferase (338 aa).

Glu-305 functions as the Proton acceptor in the catalytic mechanism.

It belongs to the CobT family.

The enzyme catalyses 5,6-dimethylbenzimidazole + nicotinate beta-D-ribonucleotide = alpha-ribazole 5'-phosphate + nicotinate + H(+). It functions in the pathway nucleoside biosynthesis; alpha-ribazole biosynthesis; alpha-ribazole from 5,6-dimethylbenzimidazole: step 1/2. Its function is as follows. Catalyzes the synthesis of alpha-ribazole-5'-phosphate from nicotinate mononucleotide (NAMN) and 5,6-dimethylbenzimidazole (DMB). The sequence is that of Nicotinate-nucleotide--dimethylbenzimidazole phosphoribosyltransferase from Rhizobium rhizogenes (strain K84 / ATCC BAA-868) (Agrobacterium radiobacter).